The chain runs to 191 residues: Peptidyl-tRNA hydrolase (191 aa).

Tyr17 is a binding site for tRNA. His22 (proton acceptor) is an active-site residue. TRNA is bound by residues Tyr68, Asn70, and Asn116.

The protein belongs to the PTH family. Monomer.

The protein localises to the cytoplasm. It carries out the reaction an N-acyl-L-alpha-aminoacyl-tRNA + H2O = an N-acyl-L-amino acid + a tRNA + H(+). Its function is as follows. Hydrolyzes ribosome-free peptidyl-tRNAs (with 1 or more amino acids incorporated), which drop off the ribosome during protein synthesis, or as a result of ribosome stalling. Catalyzes the release of premature peptidyl moieties from peptidyl-tRNA molecules trapped in stalled 50S ribosomal subunits, and thus maintains levels of free tRNAs and 50S ribosomes. The sequence is that of Peptidyl-tRNA hydrolase from Mycobacterium marinum (strain ATCC BAA-535 / M).